A 306-amino-acid polypeptide reads, in one-letter code: N-acetylmuramic acid 6-phosphate etherase (306 aa).

In terms of domain architecture, SIS spans 62–225 (IAQAFQNGGR…TTASMIRIGK (164 aa)). The active-site Proton donor is Glu-90. Glu-121 is a catalytic residue.

This sequence belongs to the GCKR-like family. MurNAc-6-P etherase subfamily. As to quaternary structure, homodimer.

It catalyses the reaction N-acetyl-D-muramate 6-phosphate + H2O = N-acetyl-D-glucosamine 6-phosphate + (R)-lactate. It participates in amino-sugar metabolism; 1,6-anhydro-N-acetylmuramate degradation. Its pathway is amino-sugar metabolism; N-acetylmuramate degradation. It functions in the pathway cell wall biogenesis; peptidoglycan recycling. Functionally, specifically catalyzes the cleavage of the D-lactyl ether substituent of MurNAc 6-phosphate, producing GlcNAc 6-phosphate and D-lactate. Together with AnmK, is also required for the utilization of anhydro-N-acetylmuramic acid (anhMurNAc) either imported from the medium or derived from its own cell wall murein, and thus plays a role in cell wall recycling. In Vibrio atlanticus (strain LGP32) (Vibrio splendidus (strain Mel32)), this protein is N-acetylmuramic acid 6-phosphate etherase.